Here is a 340-residue protein sequence, read N- to C-terminus: MSFFAPRNKKTEQEAKKSIPWVELYRPKTLDQVSSQESTVQVLKKTLLSNNLPHMLFYGSPGTGKTSTILALSRELFGPQLMKSRVLELNASDERGISIIREKVKSFAKTTVTNKVDGYPCPPFKIIILDEADSMTQDAQAALRRTMESYARITRFCLICNYMTRIIDPLSSRCSKYRFKPLDNENMVKRLEFIAADQAVSMEPGVVNALVECSGGDMRKAITFLQSAANLHQGTPITISSVEELAGAVPYNIIRSLLDTAYTKNVSNIETLSRDVAAEGYSTGIILSQLHDVLLKEETLSSPVKYKIFMKLSEVDKRLNDGADETLQLLDLLSSISVVC.

59 to 66 (GSPGTGKT) is an ATP binding site.

This sequence belongs to the activator 1 small subunits family. Heteropentamer of subunits rfc1, rfc2, rfc3, rfc4 and rfc5 that forms a complex (RFC) with PCNA in the presence of ATP. Two other complexes exist where rfc1 can be replaced by either ctf18 or elg1 to form the ctf18-RFC or the elg1-RFC complexes respectively.

It localises to the nucleus. The elongation of primed DNA templates by DNA polymerase delta and epsilon requires the action of the accessory proteins PCNA and activator 1. Subunit 2 binds ATP and single-stranded DNA. This chain is Replication factor C subunit 2 (rfc2), found in Schizosaccharomyces pombe (strain 972 / ATCC 24843) (Fission yeast).